The primary structure comprises 286 residues: Aspartate/glutamate leucyltransferase (286 aa).

The protein belongs to the R-transferase family. Bpt subfamily.

It localises to the cytoplasm. It carries out the reaction N-terminal L-glutamyl-[protein] + L-leucyl-tRNA(Leu) = N-terminal L-leucyl-L-glutamyl-[protein] + tRNA(Leu) + H(+). The enzyme catalyses N-terminal L-aspartyl-[protein] + L-leucyl-tRNA(Leu) = N-terminal L-leucyl-L-aspartyl-[protein] + tRNA(Leu) + H(+). Its function is as follows. Functions in the N-end rule pathway of protein degradation where it conjugates Leu from its aminoacyl-tRNA to the N-termini of proteins containing an N-terminal aspartate or glutamate. The protein is Aspartate/glutamate leucyltransferase of Jannaschia sp. (strain CCS1).